A 469-amino-acid polypeptide reads, in one-letter code: MSAVNTPADFNDYKVADMSLAAWGRRETFIAESEMPALMGLRRKYAAEQPLKGAKILGCIHMTIQTAVLIETLVALGAEVRWSSCNIFSTQDQAAAAIAAAGIPVFAWKGETEEEYEWCLEQTILKDGAPWDANMILDDGGDLTELLHKKYPAILDRVHGVTEETTTGVHRLLDMLAKGELKIPAINVNDSVTKSKNDNKYGCRHSLNDAIKRGTDHLLSGKQALVIGYGDVGKGSSQSLRQEGMIVKVSEVDPICAMQACMDGFEVVSPFIDGVNDGTEASIDKALLGKIDLIVTTTGNVNVCDANMLKALKKRAVVCNIGHFDNEIDTAFMRKNWAWEEVKPQVHKVHRTGAGAFDAQNDDYLILLAEGRLVNLGNATGHPSRIMDGSFANQVLAQIFLFGQKYADLSPAQKAERLTVEVLPKKLDEEVALEMVRGFGGVVTQLTKTQADYIGVTVEGPFKPHAYRY.

Positions 63, 139, and 164 each coordinate substrate. Residue 165-167 coordinates NAD(+); sequence TTT. Positions 194 and 198 each coordinate substrate. NAD(+) is bound by residues N199, 228 to 233, E251, N300, 321 to 323, and N375; these read GYGDVG and IGH.

Belongs to the adenosylhomocysteinase family. NAD(+) is required as a cofactor.

The protein localises to the cytoplasm. The enzyme catalyses S-adenosyl-L-homocysteine + H2O = L-homocysteine + adenosine. The protein operates within amino-acid biosynthesis; L-homocysteine biosynthesis; L-homocysteine from S-adenosyl-L-homocysteine: step 1/1. Functionally, may play a key role in the regulation of the intracellular concentration of adenosylhomocysteine. The protein is Adenosylhomocysteinase of Pseudomonas fluorescens (strain SBW25).